A 469-amino-acid polypeptide reads, in one-letter code: MSIPKISQVKDLTRIERIGAHSHIRGLGIDDSLEPREISQGMVGQVGARKAAGLILQMIKEGKIAGRAILIGGEPGTGKTAIAMGMAQSLGEKTPFTAIAASEIFSLEMSKTEALTQAFRRSIGVRIKEETEVICGEVVDIQIDRPATGSGAKVGKLTLKTTSMDALYDLGAKMIDSLTKEKVQNGDIIRIDKGTGKITKLGRSLSRVRDHEISGSKVNFIECPEGEIQQRRTETHTVSLHEIDVINSRAQGFFALFAGDIGEIKSEVREQINQKVAEWKEEGKAEIVPGVLFIDEVHMLDIECFSYLNRALEDDMSPILIIATNRGNTTIRGTDYKAPHGIPLDLLDRLLIINTQPYTEKDIYKILKIRCEEEDVDIQEDALQLLTKIGVETSLRYAIHLITSSSLVSVKRKGTDVSVDDIKKVYDLFVDVKRSTKYLKDYQDEYLYNSQPETTATKTNEEQQTMQTA.

73–80 (GEPGTGKT) serves as a coordination point for ATP.

This sequence belongs to the RuvB family. In terms of assembly, forms homohexameric rings. May form a dodecamer with rvb1 made of two stacked hexameric rings. Component of the chromatin remodeling Ino80 complex. Component of the RNA polymerase II holoenzyme complex.

The protein localises to the nucleus. The catalysed reaction is ATP + H2O = ADP + phosphate + H(+). Functionally, has double-stranded DNA-stimulated ATPase and ATP-dependent DNA helicase (5' to 3') activity suggesting a role in nuclear processes such as recombination and transcription. Its function is as follows. Proposed core component of the chromatin remodeling Ino80 complex which is involved in transcriptional regulation, DNA replication and probably DNA repair. This Dictyostelium discoideum (Social amoeba) protein is RuvB-like helicase 2 (rvb2).